Here is a 439-residue protein sequence, read N- to C-terminus: Rhodopsin (439 aa).

A glycan (N-linked (GlcNAc...) asparagine) is linked at N1. At 1-26 (NETWWYNPYMDIHSHWKQFDQVPAAV) the chain is on the extracellular side. The chain crosses the membrane as a helical span at residues 27–51 (YYSLGIFIAICGIIGCAGNGIVIYL). The Cytoplasmic segment spans residues 52–63 (FTKTKSLQTPAN). The helical transmembrane segment at 64–90 (MFIINLAFSDFTFSLVNGFPMMTISCF) threads the bilayer. Residues 91-102 (LKHWVFGQAACK) are Extracellular-facing. A disulfide bridge links C101 with C179. Residues 103-124 (VYGLIGGIFGLTSIMTMTMISI) form a helical membrane-spanning segment. Positions 125–127 (DRY) match the 'Ionic lock' involved in activated form stabilization motif. The Cytoplasmic portion of the chain corresponds to 125 to 144 (DRYNVIRRPMSASKKMSHRK). A helical transmembrane segment spans residues 145–165 (AFIMIVFVWIWSTIWAIGPIF). Residues 166 to 192 (GWGAYQLEGVLCNCSFDYITRDASTRS) are Extracellular-facing. Residues 193-217 (NIVCMYIFAFMFPIVVIFFCYFNIV) form a helical membrane-spanning segment. Residues 218 to 254 (MSVSNHEKEMAAMAKRLNAKELRKAQAGASAEMKLAK) are Cytoplasmic-facing. A helical membrane pass occupies residues 255 to 276 (ISIVIVTQSLLSWSPYAIVALL). The Extracellular segment spans residues 277 to 286 (AQFGPIEWVT). Residues 287 to 308 (PYAAQLPVMFAKASAIHNPMIY) traverse the membrane as a helical segment. Residue K298 is modified to N6-(retinylidene)lysine. Over 309 to 439 (SVSHPKFREA…PQAAPPQGVD (131 aa)) the chain is Cytoplasmic. S-palmitoyl cysteine attachment occurs at residues C329 and C330. Residues 369-381 (MMQKMQAQQQQQP) show a composition bias toward low complexity. The segment at 369-439 (MMQKMQAQQQ…PQAAPPQGVD (71 aa)) is disordered. The segment covering 382-433 (AYPPQGYPPQGYPPPPPQGYPPQGYPPQGYPPQGYPPPPQGPPPQGPPPQAA) has biased composition (pro residues).

This sequence belongs to the G-protein coupled receptor 1 family. Opsin subfamily. Post-translationally, contains one covalently linked retinal chromophore. Upon light absorption, the covalently bound 11-cis-retinal is converted to all-trans-retinal. After hydrolysis of the Schiff base and release of the covalently bound all-trans-retinal, active rhodopsin is regenerated by binding of a fresh molecule of 11-cis-retinal.

The protein localises to the cell projection. It is found in the rhabdomere membrane. Its function is as follows. Photoreceptor required for image-forming vision at low light intensity. Light-induced isomerization of 11-cis to all-trans retinal triggers a conformational change that activates signaling via G-proteins. Signaling mediates the activation of phospholipase C. Subsequent receptor phosphorylation mediates displacement of the bound G-protein alpha subunit by arrestin and terminates signaling. This Alloteuthis subulata (Squid) protein is Rhodopsin (RHO).